A 255-amino-acid chain; its full sequence is Large ribosomal subunit protein uL4 (255 aa).

Belongs to the universal ribosomal protein uL4 family. In terms of assembly, part of the 50S ribosomal subunit.

One of the primary rRNA binding proteins, this protein initially binds near the 5'-end of the 23S rRNA. It is important during the early stages of 50S assembly. It makes multiple contacts with different domains of the 23S rRNA in the assembled 50S subunit and ribosome. Functionally, forms part of the polypeptide exit tunnel. This chain is Large ribosomal subunit protein uL4, found in Pyrococcus horikoshii (strain ATCC 700860 / DSM 12428 / JCM 9974 / NBRC 100139 / OT-3).